We begin with the raw amino-acid sequence, 233 residues long: tRNA (guanine-N(7)-)-methyltransferase (233 aa).

S-adenosyl-L-methionine contacts are provided by E62, E87, D116, and D138. D138 is an active-site residue. Residues K142, D174, and 212–215 (TRYE) contribute to the substrate site.

It belongs to the class I-like SAM-binding methyltransferase superfamily. TrmB family.

It carries out the reaction guanosine(46) in tRNA + S-adenosyl-L-methionine = N(7)-methylguanosine(46) in tRNA + S-adenosyl-L-homocysteine. It functions in the pathway tRNA modification; N(7)-methylguanine-tRNA biosynthesis. Its function is as follows. Catalyzes the formation of N(7)-methylguanine at position 46 (m7G46) in tRNA. The sequence is that of tRNA (guanine-N(7)-)-methyltransferase from Bartonella quintana (strain Toulouse) (Rochalimaea quintana).